The chain runs to 96 residues: Evasin P1074 (96 aa).

The first 28 residues, 1 to 28, serve as a signal peptide directing secretion; the sequence is MAFNMITFLQMAVFVVILFNINLHSASA. 3 disulfides stabilise this stretch: C48-C67, C52-C69, and C63-C80. N74 is a glycosylation site (N-linked (GlcNAc...) asparagine).

The protein localises to the secreted. In terms of biological role, salivary chemokine-binding protein which binds to host chemokines CXCL1 and CXCL8. This Ixodes ricinus (Common tick) protein is Evasin P1074.